The chain runs to 201 residues: Small ribosomal subunit protein uS4 (201 aa).

Residues 91 to 157 (SRLDNVIYRA…VPFQIARETA (67 aa)) enclose the S4 RNA-binding domain.

This sequence belongs to the universal ribosomal protein uS4 family. In terms of assembly, part of the 30S ribosomal subunit. Contacts protein S5. The interaction surface between S4 and S5 is involved in control of translational fidelity.

In terms of biological role, one of the primary rRNA binding proteins, it binds directly to 16S rRNA where it nucleates assembly of the body of the 30S subunit. Its function is as follows. With S5 and S12 plays an important role in translational accuracy. This chain is Small ribosomal subunit protein uS4, found in Mycobacterium tuberculosis (strain ATCC 25177 / H37Ra).